The following is a 199-amino-acid chain: NADH-quinone oxidoreductase subunit C (199 aa).

This sequence belongs to the complex I 30 kDa subunit family. In terms of assembly, NDH-1 is composed of 14 different subunits. Subunits NuoB, C, D, E, F, and G constitute the peripheral sector of the complex.

It localises to the cell membrane. It catalyses the reaction a quinone + NADH + 5 H(+)(in) = a quinol + NAD(+) + 4 H(+)(out). Functionally, NDH-1 shuttles electrons from NADH, via FMN and iron-sulfur (Fe-S) centers, to quinones in the respiratory chain. The immediate electron acceptor for the enzyme in this species is believed to be ubiquinone. Couples the redox reaction to proton translocation (for every two electrons transferred, four hydrogen ions are translocated across the cytoplasmic membrane), and thus conserves the redox energy in a proton gradient. The polypeptide is NADH-quinone oxidoreductase subunit C (Polynucleobacter asymbioticus (strain DSM 18221 / CIP 109841 / QLW-P1DMWA-1) (Polynucleobacter necessarius subsp. asymbioticus)).